Consider the following 124-residue polypeptide: Small ribosomal subunit protein uS12 (124 aa).

Asp89 carries the 3-methylthioaspartic acid modification.

The protein belongs to the universal ribosomal protein uS12 family. In terms of assembly, part of the 30S ribosomal subunit. Contacts proteins S8 and S17. May interact with IF1 in the 30S initiation complex.

With S4 and S5 plays an important role in translational accuracy. In terms of biological role, interacts with and stabilizes bases of the 16S rRNA that are involved in tRNA selection in the A site and with the mRNA backbone. Located at the interface of the 30S and 50S subunits, it traverses the body of the 30S subunit contacting proteins on the other side and probably holding the rRNA structure together. The combined cluster of proteins S8, S12 and S17 appears to hold together the shoulder and platform of the 30S subunit. This chain is Small ribosomal subunit protein uS12, found in Haemophilus ducreyi (strain 35000HP / ATCC 700724).